A 446-amino-acid polypeptide reads, in one-letter code: N-succinylarginine dihydrolase (446 aa).

Residues 19–28 (AGLSFGNEAS), N110, and 137–138 (HR) each bind substrate. The active site involves E174. Residue R213 coordinates substrate. H249 is a catalytic residue. The substrate site is built by D251 and N364. Catalysis depends on C370, which acts as the Nucleophile.

It belongs to the succinylarginine dihydrolase family. As to quaternary structure, homodimer.

The enzyme catalyses N(2)-succinyl-L-arginine + 2 H2O + 2 H(+) = N(2)-succinyl-L-ornithine + 2 NH4(+) + CO2. It functions in the pathway amino-acid degradation; L-arginine degradation via AST pathway; L-glutamate and succinate from L-arginine: step 2/5. Functionally, catalyzes the hydrolysis of N(2)-succinylarginine into N(2)-succinylornithine, ammonia and CO(2). The sequence is that of N-succinylarginine dihydrolase from Acinetobacter baylyi (strain ATCC 33305 / BD413 / ADP1).